We begin with the raw amino-acid sequence, 476 residues long: Transcription factor HBP-1b(c1) (476 aa).

Disordered regions lie at residues 1–29, 133–159, and 171–207; these read ESRR…FGAP, HNND…PDID, and QLAA…RKSR. Residues 10-25 show a composition bias toward low complexity; that stretch reads AAAAAAAGDPRGPMPG. A compositionally biased stretch (polar residues) spans 135–144; that stretch reads NDNWGESSMA. The span at 180–191 shows a compositional bias: basic and acidic residues; that stretch reads SSDKSRDKLDHK. The region spanning 189-252 is the bZIP domain; it reads DHKSLRRLAQ…SSGDQSQSAS (64 aa). The segment at 191–211 is basic motif; it reads KSLRRLAQNREAARKSRLRKK. The stretch at 201–242 forms a coiled coil; sequence EAARKSRLRKKAYIQNLESSRLKLTQLEQELQRARQQGIFIS. Residues 217-231 are leucine-zipper; it reads LESSRLKLTQLEQEL. Positions 256 to 473 constitute a DOG1 domain; the sequence is AVAFDMEYAR…RALSSLWLAR (218 aa).

Belongs to the bZIP family. In terms of assembly, binds DNA as a dimer.

It localises to the nucleus. In terms of biological role, transcriptional activator that binds specifically to the DNA sequence 5'-TGACG-3'. Recognizes ocs elements like the as-1 motif of the cauliflower mosaic virus 35S promoter. Binding to the as-1-like cis elements mediate auxin- and salicylic acid-inducible transcription. Binds to the hexamer motif 5'-ACGTCA-3' of histone gene promoters. The sequence is that of Transcription factor HBP-1b(c1) from Triticum aestivum (Wheat).